The primary structure comprises 202 residues: FMN-dependent NADH:quinone oxidoreductase (202 aa).

FMN contacts are provided by residues Ser10 and 95–98 (MYNF).

It belongs to the azoreductase type 1 family. Homodimer. FMN is required as a cofactor.

The catalysed reaction is 2 a quinone + NADH + H(+) = 2 a 1,4-benzosemiquinone + NAD(+). It catalyses the reaction N,N-dimethyl-1,4-phenylenediamine + anthranilate + 2 NAD(+) = 2-(4-dimethylaminophenyl)diazenylbenzoate + 2 NADH + 2 H(+). In terms of biological role, quinone reductase that provides resistance to thiol-specific stress caused by electrophilic quinones. Also exhibits azoreductase activity. Catalyzes the reductive cleavage of the azo bond in aromatic azo compounds to the corresponding amines. This Alkalilimnicola ehrlichii (strain ATCC BAA-1101 / DSM 17681 / MLHE-1) protein is FMN-dependent NADH:quinone oxidoreductase.